We begin with the raw amino-acid sequence, 877 residues long: Lipophilic envelope-spanning tunnel protein B (877 aa).

Residues 1 to 19 (MSQETPASTTEAQIKNKRR) are Cytoplasmic-facing. The chain crosses the membrane as a helical span at residues 20–40 (ISPFWLLPFIALMIASWLIWD). The Periplasmic portion of the chain corresponds to 41–877 (SYQDRGNTVT…WREWGTALPK (837 aa)). 7 MCE/MlaD regions span residues 46-149 (GNTV…VALD), 160-272 (DLMI…GLYE), 279-382 (RGVI…VVPG), 391-499 (DVLT…PLYA), 515-625 (TTVS…ILYA), 634-737 (GGQI…LQEA), and 746-862 (DGLS…LLQE).

Belongs to the PqiB family. In terms of assembly, homohexamer. May interact with LetA in the inner membrane. May also interact with partners in the outer membrane.

The protein localises to the cell inner membrane. Forms a tunnel that spans the entire periplasmic space. Is probably involved in the transport of lipids between the inner membrane and the outer membrane through the tunnel. Forms a dynamic tunnel sufficiently long to mediate lipid transport directly between the two membranes without the need for a shuttle protein. Binds phospholipids. Lipids bind inside the tunnel. Required for outer membrane homeostasis. Contributes to membrane integrity. The sequence is that of Lipophilic envelope-spanning tunnel protein B from Escherichia coli (strain K12).